The primary structure comprises 103 residues: Large ribosomal subunit protein bL21 (103 aa).

The protein belongs to the bacterial ribosomal protein bL21 family. Part of the 50S ribosomal subunit. Contacts protein L20.

Its function is as follows. This protein binds to 23S rRNA in the presence of protein L20. This Parvibaculum lavamentivorans (strain DS-1 / DSM 13023 / NCIMB 13966) protein is Large ribosomal subunit protein bL21.